A 208-amino-acid polypeptide reads, in one-letter code: Thymidylate kinase (208 aa).

13–20 (GLEGAGKS) lines the ATP pocket.

Belongs to the thymidylate kinase family.

The catalysed reaction is dTMP + ATP = dTDP + ADP. Functionally, phosphorylation of dTMP to form dTDP in both de novo and salvage pathways of dTTP synthesis. This chain is Thymidylate kinase, found in Shewanella amazonensis (strain ATCC BAA-1098 / SB2B).